A 419-amino-acid chain; its full sequence is MSSIETYMQSVGEQTRTASRAMMRATGAAKNQALLAMAEAILAQRAELQAANAKDVAAARANGLEAALLDRLTLSDRSIALMAEGLRQIAALPDPVGSITATSVRPNGMRVAQMRVPLGVIGIIYESRPNVTIDAAALCLKSGNATILRGGSEALHSNVALGRIVQAGLQAAGLPTAAVQVIDTTDRAAVGKLVTMTEHVDVIVPRGGKGLISRLAQEARVPLIKHLDGNCHVYVDAAADLAKAHDIAFNAKTYRYGVCGAMETLLVHADVAQRLLPVLGQALHEHGVELRGCARALQWLPEGKPADDADWATEYLGPILAVRVVDTIDEAMDHIARWGSGHTDAIVTENLSAAQRFQREVDSSSVYVNLPTCFADGFEYGLGAEIGISTNRLHARGPVGLEGLTTLKWVLNGEGQVRG.

Belongs to the gamma-glutamyl phosphate reductase family.

It is found in the cytoplasm. It catalyses the reaction L-glutamate 5-semialdehyde + phosphate + NADP(+) = L-glutamyl 5-phosphate + NADPH + H(+). Its pathway is amino-acid biosynthesis; L-proline biosynthesis; L-glutamate 5-semialdehyde from L-glutamate: step 2/2. Functionally, catalyzes the NADPH-dependent reduction of L-glutamate 5-phosphate into L-glutamate 5-semialdehyde and phosphate. The product spontaneously undergoes cyclization to form 1-pyrroline-5-carboxylate. This chain is Gamma-glutamyl phosphate reductase, found in Bordetella parapertussis (strain 12822 / ATCC BAA-587 / NCTC 13253).